The following is a 416-amino-acid chain: D-amino acid dehydrogenase (416 aa).

3–17 contacts FAD; the sequence is ITILGSGVIGVTTAY.

It belongs to the DadA oxidoreductase family. FAD is required as a cofactor.

It catalyses the reaction a D-alpha-amino acid + A + H2O = a 2-oxocarboxylate + AH2 + NH4(+). The protein operates within amino-acid degradation; D-alanine degradation; NH(3) and pyruvate from D-alanine: step 1/1. Functionally, oxidative deamination of D-amino acids. The protein is D-amino acid dehydrogenase of Brucella canis (strain ATCC 23365 / NCTC 10854 / RM-666).